Consider the following 206-residue polypeptide: Small ribosomal subunit protein uS4 (206 aa).

Residues 98-163 form the S4 RNA-binding domain; the sequence is MRLDNIVYRL…SEKFKTFVEN (66 aa).

It belongs to the universal ribosomal protein uS4 family. As to quaternary structure, part of the 30S ribosomal subunit. Contacts protein S5. The interaction surface between S4 and S5 is involved in control of translational fidelity.

One of the primary rRNA binding proteins, it binds directly to 16S rRNA where it nucleates assembly of the body of the 30S subunit. In terms of biological role, with S5 and S12 plays an important role in translational accuracy. The polypeptide is Small ribosomal subunit protein uS4 (Clostridium beijerinckii (strain ATCC 51743 / NCIMB 8052) (Clostridium acetobutylicum)).